Reading from the N-terminus, the 240-residue chain is MADS-box transcription factor 27 (240 aa).

The MADS-box domain maps to 1–61; that stretch reads MGRGKIVIRR…GRLYEYSSTS (61 aa). One can recognise a K-box domain in the interval 86–176; sequence LKFWQREAAS…YKKISLIRQE (91 aa). Over residues 220–231 the composition is skewed to polar residues; that stretch reads LPQHSDAEQSTA. Residues 220 to 240 are disordered; it reads LPQHSDAEQSTAPKLGLQLNP.

In terms of tissue distribution, ubiquitous.

The protein resides in the nucleus. Functionally, probable transcription factor. This is MADS-box transcription factor 27 (MADS27) from Oryza sativa subsp. japonica (Rice).